A 507-amino-acid polypeptide reads, in one-letter code: Lysine--tRNA ligase (507 aa).

The 'HIGH' region motif lies at 26 to 34 (PSGPIHVGN). The short motif at 270 to 274 (AMHSS) is the 'KMSKS' region element.

Belongs to the class-I aminoacyl-tRNA synthetase family.

Its subcellular location is the cytoplasm. It catalyses the reaction tRNA(Lys) + L-lysine + ATP = L-lysyl-tRNA(Lys) + AMP + diphosphate. The protein is Lysine--tRNA ligase (lysS) of Thermoplasma acidophilum (strain ATCC 25905 / DSM 1728 / JCM 9062 / NBRC 15155 / AMRC-C165).